A 354-amino-acid chain; its full sequence is Probable RNA methyltransferase AZOSEA28700 (354 aa).

Residue Glu-88 is the Proton acceptor of the active site. The region spanning Leu-91 to Asp-317 is the Radical SAM core domain. Cys-98 and Cys-322 are oxidised to a cystine. Residues Cys-105, Cys-109, and Cys-112 each coordinate [4Fe-4S] cluster. S-adenosyl-L-methionine contacts are provided by residues Gly-150–Glu-151, Ser-180, Ser-203–His-205, and Asn-279. Residue Cys-322 is the S-methylcysteine intermediate of the active site.

Belongs to the radical SAM superfamily. RlmN family. [4Fe-4S] cluster serves as cofactor.

The protein localises to the cytoplasm. The polypeptide is Probable RNA methyltransferase AZOSEA28700 (Aromatoleum aromaticum (strain DSM 19018 / LMG 30748 / EbN1) (Azoarcus sp. (strain EbN1))).